The following is a 1168-amino-acid chain: Probable pre-mRNA-splicing factor ATP-dependent RNA helicase DEAH5 (1168 aa).

Residues 76 to 206 (IYPPKPKSEK…KDEYVEEDKG (131 aa)) are disordered. Basic and acidic residues-rich tracts occupy residues 81-172 (PKSE…DRRS) and 180-206 (GRGD…EDKG). Positions 214–283 (YQVYKGRVTR…SSDKYSLSMR (70 aa)) constitute an S1 motif domain. Residues 289–326 (TGRDLIPLRKPSDEDDSSRSNPSYRTKDGQVTKTGISG) form a disordered region. Ser-411 bears the Phosphoserine mark. Residues 525–688 (IQAVHDNQVL…FFNCNIFTIP (164 aa)) form the Helicase ATP-binding domain. 538–545 (GETGSGKT) contacts ATP. The short motif at 635–638 (DEAH) is the DEAH box element. One can recognise a Helicase C-terminal domain in the interval 706–886 (YLDAALITVL…MTTLTMKAMG (181 aa)).

This sequence belongs to the DEAD box helicase family. DEAH subfamily. PRP22 sub-subfamily.

It localises to the nucleus. The catalysed reaction is ATP + H2O = ADP + phosphate + H(+). In terms of biological role, may be involved in pre-mRNA splicing. The polypeptide is Probable pre-mRNA-splicing factor ATP-dependent RNA helicase DEAH5 (Arabidopsis thaliana (Mouse-ear cress)).